Consider the following 2291-residue polypeptide: Protein Ycf2 (2291 aa).

Position 1645 to 1652 (1645 to 1652 (GSIGTGRS)) interacts with ATP.

Belongs to the Ycf2 family.

It is found in the plastid. Its subcellular location is the chloroplast stroma. In terms of biological role, probable ATPase of unknown function. Its presence in a non-photosynthetic plant (Epifagus virginiana) and experiments in tobacco indicate that it has an essential function which is probably not related to photosynthesis. This chain is Protein Ycf2, found in Olimarabidopsis pumila (Dwarf rocket).